We begin with the raw amino-acid sequence, 444 residues long: Proline--tRNA ligase (444 aa).

Belongs to the class-II aminoacyl-tRNA synthetase family. ProS type 2 subfamily. In terms of assembly, homodimer.

It localises to the cytoplasm. The enzyme catalyses tRNA(Pro) + L-proline + ATP = L-prolyl-tRNA(Pro) + AMP + diphosphate. In terms of biological role, catalyzes the attachment of proline to tRNA(Pro) in a two-step reaction: proline is first activated by ATP to form Pro-AMP and then transferred to the acceptor end of tRNA(Pro). This is Proline--tRNA ligase from Methylobacterium sp. (strain 4-46).